A 107-amino-acid chain; its full sequence is Phosphoribosyl-ATP pyrophosphatase (107 aa).

It belongs to the PRA-PH family.

The protein localises to the cytoplasm. It catalyses the reaction 1-(5-phospho-beta-D-ribosyl)-ATP + H2O = 1-(5-phospho-beta-D-ribosyl)-5'-AMP + diphosphate + H(+). The protein operates within amino-acid biosynthesis; L-histidine biosynthesis; L-histidine from 5-phospho-alpha-D-ribose 1-diphosphate: step 2/9. This chain is Phosphoribosyl-ATP pyrophosphatase, found in Azoarcus sp. (strain BH72).